The chain runs to 87 residues: U9-ctenitoxin-Pn1a (87 aa).

The N-terminal stretch at Met-1–Ala-22 is a signal peptide. Residues Glu-23–Ala-37 constitute a propeptide that is removed on maturation. Disulfide bonds link Cys-40/Cys-54, Cys-47/Cys-64, Cys-53/Cys-73, and Cys-66/Cys-71. Residues Lys-75–Arg-87 constitute a propeptide that is removed on maturation.

Belongs to the neurotoxin 02 (plectoxin) family. 01 (Tx3) subfamily. As to expression, expressed by the venom gland.

It is found in the secreted. Functionally, antagonist of L-type calcium channels (Cav1/CACNA1). The polypeptide is U9-ctenitoxin-Pn1a (Phoneutria nigriventer (Brazilian armed spider)).